The sequence spans 345 residues: Adenosine kinase 2 (345 aa).

Asp-300 is an active-site residue.

It belongs to the carbohydrate kinase PfkB family. Interacts with the begomovirus AL2 protein and the curtovirus L2 protein. Interacts with KIN11. Mg(2+) is required as a cofactor. In terms of processing, phosphorylated by KIN11. Widely expressed.

It localises to the cytoplasm. It catalyses the reaction adenosine + ATP = AMP + ADP + H(+). Its pathway is purine metabolism; AMP biosynthesis via salvage pathway; AMP from adenosine: step 1/1. Inactivated by the begomovirus AL2 protein or the curtovirus L2 protein. Functionally, ATP dependent phosphorylation of adenosine and other related nucleoside analogs to monophosphate derivatives. Essential to sustain methyl recycling. This Arabidopsis thaliana (Mouse-ear cress) protein is Adenosine kinase 2.